Reading from the N-terminus, the 97-residue chain is Exodeoxyribonuclease 7 small subunit (97 aa).

Positions 1–22 are disordered; sequence MAKTASPGATPPDNGTEPLPDN.

This sequence belongs to the XseB family. Heterooligomer composed of large and small subunits.

The protein resides in the cytoplasm. It carries out the reaction Exonucleolytic cleavage in either 5'- to 3'- or 3'- to 5'-direction to yield nucleoside 5'-phosphates.. Functionally, bidirectionally degrades single-stranded DNA into large acid-insoluble oligonucleotides, which are then degraded further into small acid-soluble oligonucleotides. This is Exodeoxyribonuclease 7 small subunit from Burkholderia ambifaria (strain MC40-6).